Here is a 347-residue protein sequence, read N- to C-terminus: Dihydroorotase (347 aa).

2 residues coordinate Zn(2+): H17 and H19. Substrate contacts are provided by residues 19–21 (HLR) and N45. Zn(2+) contacts are provided by K103, H140, and H178. N6-carboxylysine is present on K103. Position 140 (H140) interacts with substrate. L223 serves as a coordination point for substrate. D251 lines the Zn(2+) pocket. The active site involves D251. H255 and A267 together coordinate substrate.

Belongs to the metallo-dependent hydrolases superfamily. DHOase family. Class II DHOase subfamily. As to quaternary structure, homodimer. Zn(2+) is required as a cofactor.

It carries out the reaction (S)-dihydroorotate + H2O = N-carbamoyl-L-aspartate + H(+). It functions in the pathway pyrimidine metabolism; UMP biosynthesis via de novo pathway; (S)-dihydroorotate from bicarbonate: step 3/3. In terms of biological role, catalyzes the reversible cyclization of carbamoyl aspartate to dihydroorotate. The sequence is that of Dihydroorotase from Pectobacterium carotovorum subsp. carotovorum (strain PC1).